We begin with the raw amino-acid sequence, 337 residues long: ATP-dependent 6-phosphofructokinase (337 aa).

Glycine 11 contacts ATP. 21–25 (RAVVR) lines the ADP pocket. ATP-binding positions include 72-73 (RY) and 102-105 (GDGS). A Mg(2+)-binding site is contributed by aspartate 103. A substrate-binding site is contributed by 125-127 (TID). The active-site Proton acceptor is aspartate 127. Arginine 154 contacts ADP. Residues arginine 162 and 169 to 171 (MGR) each bind substrate. ADP is bound by residues 185-187 (GAD) and 214-216 (KNH). Residues glutamate 223, arginine 245, and 251–254 (HILR) each bind substrate.

This sequence belongs to the phosphofructokinase type A (PFKA) family. ATP-dependent PFK group I subfamily. Prokaryotic clade 'B1' sub-subfamily. In terms of assembly, homotetramer. Mg(2+) is required as a cofactor.

Its subcellular location is the cytoplasm. It carries out the reaction beta-D-fructose 6-phosphate + ATP = beta-D-fructose 1,6-bisphosphate + ADP + H(+). Its pathway is carbohydrate degradation; glycolysis; D-glyceraldehyde 3-phosphate and glycerone phosphate from D-glucose: step 3/4. Its activity is regulated as follows. Allosterically activated by ADP and other diphosphonucleosides, and allosterically inhibited by phosphoenolpyruvate. In terms of biological role, catalyzes the phosphorylation of D-fructose 6-phosphate to fructose 1,6-bisphosphate by ATP, the first committing step of glycolysis. In Streptococcus uberis (strain ATCC BAA-854 / 0140J), this protein is ATP-dependent 6-phosphofructokinase.